Reading from the N-terminus, the 260-residue chain is 5'-nucleotidase SurE (260 aa).

Asp-8, Asp-9, Ser-39, and Asn-91 together coordinate a divalent metal cation.

It belongs to the SurE nucleotidase family. A divalent metal cation serves as cofactor.

The protein resides in the cytoplasm. It catalyses the reaction a ribonucleoside 5'-phosphate + H2O = a ribonucleoside + phosphate. Functionally, nucleotidase that shows phosphatase activity on nucleoside 5'-monophosphates. The protein is 5'-nucleotidase SurE of Acidovorax ebreus (strain TPSY) (Diaphorobacter sp. (strain TPSY)).